Reading from the N-terminus, the 124-residue chain is Fluoride-specific ion channel FluC 1 (124 aa).

4 helical membrane passes run 7-27 (IQSK…LGAI), 32-52 (LNNY…IVGL), 58-78 (IQFF…GWIL), and 93-113 (AGLI…TFWI). Na(+)-binding residues include Gly-68 and Thr-71.

It belongs to the fluoride channel Fluc/FEX (TC 1.A.43) family.

The protein localises to the cell inner membrane. It carries out the reaction fluoride(in) = fluoride(out). Na(+) is not transported, but it plays an essential structural role and its presence is essential for fluoride channel function. Fluoride-specific ion channel. Important for reducing fluoride concentration in the cell, thus reducing its toxicity. In Prochlorococcus marinus (strain SARG / CCMP1375 / SS120), this protein is Fluoride-specific ion channel FluC 1.